We begin with the raw amino-acid sequence, 243 residues long: Probable transcriptional regulatory protein LGAS_1276 (243 aa).

The tract at residues 1–22 (MSGHSKWHNIQGRKNAQDAKRG) is disordered.

It belongs to the TACO1 family.

The protein resides in the cytoplasm. This Lactobacillus gasseri (strain ATCC 33323 / DSM 20243 / BCRC 14619 / CIP 102991 / JCM 1131 / KCTC 3163 / NCIMB 11718 / NCTC 13722 / AM63) protein is Probable transcriptional regulatory protein LGAS_1276.